The primary structure comprises 244 residues: Phosphonates import ATP-binding protein PhnC 2 (244 aa).

The ABC transporter domain maps to 3–242 (LRVEGLKKVY…ELTDYTVDQL (240 aa)). Residue 36-43 (GPSGAGKS) coordinates ATP.

Belongs to the ABC transporter superfamily. Phosphonates importer (TC 3.A.1.9.1) family. As to quaternary structure, the complex is composed of two ATP-binding proteins (PhnC), two transmembrane proteins (PhnE) and a solute-binding protein (PhnD).

It is found in the cell membrane. The enzyme catalyses phosphonate(out) + ATP + H2O = phosphonate(in) + ADP + phosphate + H(+). In terms of biological role, part of the ABC transporter complex PhnCDE involved in phosphonates import. Responsible for energy coupling to the transport system. The protein is Phosphonates import ATP-binding protein PhnC 2 of Halalkalibacterium halodurans (strain ATCC BAA-125 / DSM 18197 / FERM 7344 / JCM 9153 / C-125) (Bacillus halodurans).